A 370-amino-acid chain; its full sequence is Homoserine kinase (370 aa).

Residues 1 to 34 (MASLCFQSPSKPISYFQPKSNPSPPLFAKVSVFR) constitute a chloroplast transit peptide. ATP is bound at residue 143-154 (LPLGSGLGSSAA).

It belongs to the GHMP kinase family. Homoserine kinase subfamily.

Its subcellular location is the plastid. It is found in the chloroplast stroma. It carries out the reaction L-homoserine + ATP = O-phospho-L-homoserine + ADP + H(+). The protein operates within amino-acid biosynthesis; L-threonine biosynthesis; L-threonine from L-aspartate: step 4/5. Its function is as follows. Catalyzes the ATP-dependent phosphorylation of L-homoserine to L-homoserine phosphate. Is specific for L-homoserine and cannot use other substrates such D-serine, L-serine, D-threonine and L-threonine, galactose or D-homoserine in vitro. Required for susceptibility to the downy mildew pathogen Hyaloperonospora parasitica. In Arabidopsis thaliana (Mouse-ear cress), this protein is Homoserine kinase (HSK).